Consider the following 271-residue polypeptide: Formamidopyrimidine-DNA glycosylase (271 aa).

P2 (schiff-base intermediate with DNA) is an active-site residue. E3 serves as the catalytic Proton donor. The Proton donor; for beta-elimination activity role is filled by K57. Residues H90, R109, and K151 each contribute to the DNA site. The FPG-type zinc finger occupies 236–270 (HVYGRGGKTCTQCGHMLSEIKLGQRATVFCSLCQQ). R260 (proton donor; for delta-elimination activity) is an active-site residue.

It belongs to the FPG family. In terms of assembly, monomer. Zn(2+) is required as a cofactor.

It carries out the reaction Hydrolysis of DNA containing ring-opened 7-methylguanine residues, releasing 2,6-diamino-4-hydroxy-5-(N-methyl)formamidopyrimidine.. The enzyme catalyses 2'-deoxyribonucleotide-(2'-deoxyribose 5'-phosphate)-2'-deoxyribonucleotide-DNA = a 3'-end 2'-deoxyribonucleotide-(2,3-dehydro-2,3-deoxyribose 5'-phosphate)-DNA + a 5'-end 5'-phospho-2'-deoxyribonucleoside-DNA + H(+). Functionally, involved in base excision repair of DNA damaged by oxidation or by mutagenic agents. Acts as a DNA glycosylase that recognizes and removes damaged bases. Has a preference for oxidized purines, such as 7,8-dihydro-8-oxoguanine (8-oxoG). Has AP (apurinic/apyrimidinic) lyase activity and introduces nicks in the DNA strand. Cleaves the DNA backbone by beta-delta elimination to generate a single-strand break at the site of the removed base with both 3'- and 5'-phosphates. The protein is Formamidopyrimidine-DNA glycosylase of Shewanella pealeana (strain ATCC 700345 / ANG-SQ1).